Consider the following 856-residue polypeptide: Vomeronasal type-2 receptor 116 (856 aa).

Positions 1-18 are cleaved as a signal peptide; the sequence is MFTLIFLFLFLNIPLLVA. Topologically, residues 19–586 are extracellular; it reads DFISPRCFWK…VFLSYEEPLG (568 aa). Asn-94 carries N-linked (GlcNAc...) asparagine glycosylation. A helical membrane pass occupies residues 587–607; the sequence is VALSLLSLCFSAFTTVVLGIF. The Cytoplasmic portion of the chain corresponds to 608–622; the sequence is VKHHNTPIVKANNRT. The helical transmembrane segment at 623 to 643 threads the bilayer; sequence LTYLLLISLIFCFLCPLLFIG. Topologically, residues 644–658 are extracellular; sequence HPNSATCILQQLTFG. Residues 659 to 679 traverse the membrane as a helical segment; the sequence is VVFTVSLSTVLAKTITVVLAF. At 680-690 the chain is on the cytoplasmic side; that stretch reads KIIASQRMMKY. A helical membrane pass occupies residues 691 to 711; it reads FLISGAINYIIPICILIQVIV. Topologically, residues 712 to 745 are extracellular; that stretch reads CAVWLRASPPSVDIDAHSEHGQIIIVCHKGSVNA. A helical membrane pass occupies residues 746 to 766; it reads FYCVLGYLAILAFGSFTLAFL. The Cytoplasmic segment spans residues 767–778; sequence SRNLPGAFNEAK. A helical membrane pass occupies residues 779–799; it reads SITFSMLVFCSVWVTFIPVYH. Residues 800 to 806 are Extracellular-facing; that stretch reads STKGKVM. A helical transmembrane segment spans residues 807 to 827; sequence VAVEIFSTLASSAGMLGCIFV. The Cytoplasmic segment spans residues 828-856; that stretch reads PKCYTILFRQDQNSLEMIRVKSSSNVHVS.

This sequence belongs to the G-protein coupled receptor 3 family. As to expression, expressed in the vomeronasal organ.

It is found in the cell membrane. In terms of biological role, receptor for the Esp1 pheromone. Mediates the response to Esp1 which enhances female sexual receptive behavior (lordosis) upon male mounting, resulting in successful copulation. In Mus musculus (Mouse), this protein is Vomeronasal type-2 receptor 116.